The sequence spans 209 residues: PRA1 family protein E (209 aa).

The segment at 1–20 (MNQKPPPYGYGGAGGGGVGP) is disordered. Positions 9-19 (GYGGAGGGGVG) are enriched in gly residues. 3 helical membrane passes run 90-110 (IVFL…VVFI), 132-152 (VDDK…LVYT), and 155-175 (GENV…HGAF).

Belongs to the PRA1 family. Interacts with PRA1B1, PRA1B2, PRA1B3, PRA1B4, PRA1B5 and PRA1B6. In terms of tissue distribution, expressed in hypocotyls, roots, lateral roots, columella cells, leaves and shoot apex.

It localises to the endosome membrane. In terms of biological role, may be involved in both secretory and endocytic intracellular trafficking in the endosomal/prevacuolar compartments. The sequence is that of PRA1 family protein E (PRA1E) from Arabidopsis thaliana (Mouse-ear cress).